The sequence spans 973 residues: Valine--tRNA ligase (973 aa).

A 'HIGH' region motif is present at residues 57–67; it reads PNVTGSLHMGH. The 'KMSKS' region motif lies at 569 to 573; that stretch reads KMSKS. An ATP-binding site is contributed by lysine 572. Positions 901 to 970 form a coiled coil; the sequence is MAGLIDKEAE…AKILEQKIQI (70 aa).

The protein belongs to the class-I aminoacyl-tRNA synthetase family. ValS type 1 subfamily. In terms of assembly, monomer.

Its subcellular location is the cytoplasm. It catalyses the reaction tRNA(Val) + L-valine + ATP = L-valyl-tRNA(Val) + AMP + diphosphate. Functionally, catalyzes the attachment of valine to tRNA(Val). As ValRS can inadvertently accommodate and process structurally similar amino acids such as threonine, to avoid such errors, it has a 'posttransfer' editing activity that hydrolyzes mischarged Thr-tRNA(Val) in a tRNA-dependent manner. This Colwellia psychrerythraea (strain 34H / ATCC BAA-681) (Vibrio psychroerythus) protein is Valine--tRNA ligase.